The chain runs to 340 residues: MSIPTRKIGNDTVPAIGFGCMGLHAMYGPSSEEANQAVLTHAADLGCTFWDSSDMYGFGANEECIGRWFKQTGRRKEIFLATKFGYEKNPETGELSLNNEPDYIEKALDLSLKRLGIDCIDLYYVHRFSGETPIEKIMGALKKCVEAGKIRYIGLSECSANTIRRAAAVYPVSAVQVEYSPFSLEIERPEIGVMKACRENNITIVCYAPLGRGFLTGAYKSPDDFPEGDFRRKAPRYQKENFYKNLELVTKIEKIATANNITPGQLSLAWLLAQGDDILPIPGTKRVKYLEENFGALKVKLSDATVKEIREACDNAEVIGARYPPGAGSKIFMDTPPMPK.

Catalysis depends on Tyr56, which acts as the Proton donor. His126 lines the substrate pocket. 208-218 lines the NADP(+) pocket; the sequence is APLGRGFLTGA.

This sequence belongs to the aldo/keto reductase family. Aldo/keto reductase 2 subfamily. In terms of assembly, monomer.

The polypeptide is Aldo-keto reductase yakc [NADP(+)] (yakc) (Schizosaccharomyces pombe (strain 972 / ATCC 24843) (Fission yeast)).